Reading from the N-terminus, the 299-residue chain is ATP phosphoribosyltransferase (299 aa).

Belongs to the ATP phosphoribosyltransferase family. Long subfamily. Mg(2+) serves as cofactor.

The protein localises to the cytoplasm. The catalysed reaction is 1-(5-phospho-beta-D-ribosyl)-ATP + diphosphate = 5-phospho-alpha-D-ribose 1-diphosphate + ATP. The protein operates within amino-acid biosynthesis; L-histidine biosynthesis; L-histidine from 5-phospho-alpha-D-ribose 1-diphosphate: step 1/9. Feedback inhibited by histidine. Its function is as follows. Catalyzes the condensation of ATP and 5-phosphoribose 1-diphosphate to form N'-(5'-phosphoribosyl)-ATP (PR-ATP). Has a crucial role in the pathway because the rate of histidine biosynthesis seems to be controlled primarily by regulation of HisG enzymatic activity. In Shewanella frigidimarina (strain NCIMB 400), this protein is ATP phosphoribosyltransferase.